The following is a 303-amino-acid chain: tRNA pseudouridine synthase B (303 aa).

Residue D47 is the Nucleophile of the active site.

It belongs to the pseudouridine synthase TruB family. Type 1 subfamily.

The enzyme catalyses uridine(55) in tRNA = pseudouridine(55) in tRNA. In terms of biological role, responsible for synthesis of pseudouridine from uracil-55 in the psi GC loop of transfer RNAs. This Legionella pneumophila subsp. pneumophila (strain Philadelphia 1 / ATCC 33152 / DSM 7513) protein is tRNA pseudouridine synthase B.